Here is a 452-residue protein sequence, read N- to C-terminus: GTPase Der (452 aa).

2 EngA-type G domains span residues 4–169 (PIVA…PAPQ) and 177–352 (IKVA…QEHR). GTP is bound by residues 10–17 (GRPNVGKS), 57–61 (DTGGL), 120–123 (NKCE), 183–190 (GRPNVGKS), 230–234 (DTAGI), and 295–298 (NKWD). The KH-like domain occupies 353 to 439 (RRVTTAVINE…IRLFWRGKKV (87 aa)).

Belongs to the TRAFAC class TrmE-Era-EngA-EngB-Septin-like GTPase superfamily. EngA (Der) GTPase family. In terms of assembly, associates with the 50S ribosomal subunit.

GTPase that plays an essential role in the late steps of ribosome biogenesis. This chain is GTPase Der, found in Synechocystis sp. (strain ATCC 27184 / PCC 6803 / Kazusa).